A 390-amino-acid polypeptide reads, in one-letter code: Putative glutamate--cysteine ligase 2 (390 aa).

This sequence belongs to the glutamate--cysteine ligase type 2 family. YbdK subfamily.

It catalyses the reaction L-cysteine + L-glutamate + ATP = gamma-L-glutamyl-L-cysteine + ADP + phosphate + H(+). Functionally, ATP-dependent carboxylate-amine ligase which exhibits weak glutamate--cysteine ligase activity. This is Putative glutamate--cysteine ligase 2 from Chloroflexus aggregans (strain MD-66 / DSM 9485).